Here is a 112-residue protein sequence, read N- to C-terminus: MPRKRMIGVVVSDKMDKTVVVAVERHVQHPLYKKYIKRTKKYHAHDEKNECRVGDVVEIEETRPLSKTKRWRVVKIIKRFEPERILKEEEEVQDELEEIEGEVVEEKGGAES.

Belongs to the universal ribosomal protein uS17 family. As to quaternary structure, part of the 30S ribosomal subunit.

In terms of biological role, one of the primary rRNA binding proteins, it binds specifically to the 5'-end of 16S ribosomal RNA. This is Small ribosomal subunit protein uS17 from Thermotoga neapolitana (strain ATCC 49049 / DSM 4359 / NBRC 107923 / NS-E).